The chain runs to 339 residues: Ribosomal RNA small subunit methyltransferase H (339 aa).

S-adenosyl-L-methionine-binding positions include 56-58, Asp76, Phe102, Asp123, and Gln130; that span reads GGH. Disordered stretches follow at residues 274-309 and 320-339; these read RHSR…KAEV and LRVA…PQHS. A compositionally biased stretch (polar residues) spans 325–339; the sequence is RTDTPYNTDPSPQHS.

It belongs to the methyltransferase superfamily. RsmH family.

Its subcellular location is the cytoplasm. The catalysed reaction is cytidine(1402) in 16S rRNA + S-adenosyl-L-methionine = N(4)-methylcytidine(1402) in 16S rRNA + S-adenosyl-L-homocysteine + H(+). Its function is as follows. Specifically methylates the N4 position of cytidine in position 1402 (C1402) of 16S rRNA. The chain is Ribosomal RNA small subunit methyltransferase H from Psychrobacter sp. (strain PRwf-1).